Reading from the N-terminus, the 280-residue chain is 3-hydroxyanthranilate 3,4-dioxygenase (280 aa).

A domain A (catalytic) region spans residues 1 to 160; that stretch reads MAIPVNVKKW…SEQYKSGKPD (160 aa). R43 provides a ligand contact to O2. Fe cation contacts are provided by H47, E53, and H91. Position 53 (E53) interacts with substrate. 2 residues coordinate substrate: R95 and E105. The tract at residues 161–177 is linker; it reads PAQPIGKMPFFLNTEQV. The domain B stretch occupies residues 178 to 280; sequence MEPFSFQNWL…IALSTSQVPA (103 aa).

Belongs to the 3-HAO family. As to quaternary structure, monomer. Requires Fe(2+) as cofactor.

Its subcellular location is the cytoplasm. The protein localises to the cytosol. It catalyses the reaction 3-hydroxyanthranilate + O2 = (2Z,4Z)-2-amino-3-carboxymuconate 6-semialdehyde. It functions in the pathway cofactor biosynthesis; NAD(+) biosynthesis; quinolinate from L-kynurenine: step 3/3. Catalyzes the oxidative ring opening of 3-hydroxyanthranilate to 2-amino-3-carboxymuconate semialdehyde, which spontaneously cyclizes to quinolinate. This chain is 3-hydroxyanthranilate 3,4-dioxygenase (haao), found in Xenopus tropicalis (Western clawed frog).